A 690-amino-acid chain; its full sequence is NF-kappa-B-repressing factor (690 aa).

Residues 1–296 are active repression domain; that stretch reads MEKILHMAEG…FKHIIGEDLV (296 aa). The short motif at 25 to 45 is the Nuclear localization signal element; it reads KPSKGQKRYLSTYDGQNPPKK. 3 disordered regions span residues 27–49, 65–85, and 133–160; these read SKGQKRYLSTYDGQNPPKKQAGS, SSSKAERQEDPYGPQTKDVNG, and YFDSGNPAPSSTSQQANCQPAPEPPPSQ. Residue K68 forms a Glycyl lysine isopeptide (Lys-Gly) (interchain with G-Cter in SUMO2) linkage. Residues 139–150 are compositionally biased toward polar residues; that stretch reads PAPSSTSQQANC. The DNA-binding element occupies 296 to 388; sequence VVCQIGMLSY…RVFLQDHCLA (93 aa). A compositionally biased stretch (polar residues) spans 414–425; it reads PTYPSVKSSQCH. The tract at residues 414–436 is disordered; sequence PTYPSVKSSQCHSGSSPKGSGKK. Residue K500 forms a Glycyl lysine isopeptide (Lys-Gly) (interchain with G-Cter in SUMO2) linkage. A G-patch domain is found at 551-596; that stretch reads EDNIGNQLLRKMGWTGGGLGKSGEGIREPISVKEQHKREGLGLDVE. Positions 600 to 664 constitute an R3H domain; the sequence is KIAKRDIEQI…DRYLVVGRKR (65 aa). S618 bears the Phosphoserine mark. Glycyl lysine isopeptide (Lys-Gly) (interchain with G-Cter in SUMO2) cross-links involve residues K666 and K674.

As to quaternary structure, interacts with NF-kappa-B. Interacts with XRN2. Interacts (via G-patch domain) with DHX15; promoting the RNA helicase activity of DHX15.

The protein localises to the nucleus. Its subcellular location is the nucleolus. Functionally, enhances the ATPase activity of DHX15 by acting like a brace that tethers mobile sections of DHX15 together, stabilizing a functional conformation with high RNA affinity of DHX15. Involved in the constitutive silencing of the interferon beta promoter, independently of the virus-induced signals, and in the inhibition of the basal and cytokine-induced iNOS promoter activity. Also involved in the regulation of IL-8 transcription. May also act as a DNA-binding transcription regulator: interacts with a specific negative regulatory element (NRE) 5'-AATTCCTCTGA-3' to mediate transcriptional repression of certain NK-kappa-B responsive genes. The chain is NF-kappa-B-repressing factor (Nkrf) from Mus musculus (Mouse).